A 231-amino-acid polypeptide reads, in one-letter code: Cytidylate kinase (231 aa).

18–26 contacts ATP; it reads GPSGTGKSS.

Belongs to the cytidylate kinase family. Type 1 subfamily.

The protein localises to the cytoplasm. It carries out the reaction CMP + ATP = CDP + ADP. The catalysed reaction is dCMP + ATP = dCDP + ADP. The protein is Cytidylate kinase of Streptomyces coelicolor (strain ATCC BAA-471 / A3(2) / M145).